Here is a 315-residue protein sequence, read N- to C-terminus: Thioredoxin reductase (315 aa).

An FAD-binding site is contributed by Glu-34–Gln-41. Cys-134 and Cys-137 are disulfide-bonded. Asp-282 to Val-291 contacts FAD.

Belongs to the class-II pyridine nucleotide-disulfide oxidoreductase family. In terms of assembly, homodimer. It depends on FAD as a cofactor.

It localises to the cytoplasm. The catalysed reaction is [thioredoxin]-dithiol + NADP(+) = [thioredoxin]-disulfide + NADPH + H(+). The chain is Thioredoxin reductase (trxB) from Peptoclostridium litorale (Clostridium litorale).